The chain runs to 449 residues: CCAAT/enhancer-binding protein (449 aa).

Disordered stretches follow at residues 211 to 233 (HATY…TIKE), 276 to 302 (GNPL…NGSQ), and 334 to 386 (SKLH…KAKV). 3 stretches are compositionally biased toward low complexity: residues 215–229 (NNSS…SDSS), 280–301 (NGGN…SNGS), and 339–349 (QQQHQQHQQQQ). Positions 357 to 368 (KHVDKGTDEYRR) are enriched in basic and acidic residues. The bZIP domain maps to 363–426 (TDEYRRRRER…QLHKQIYMQL (64 aa)). Residues 367-396 (RRRRERNNIAVRKSREKAKVRSREVEERVK) are basic motif. The leucine-zipper stretch occupies residues 398-405 (LLKEKDAL).

It belongs to the bZIP family. C/EBP subfamily. As to quaternary structure, binds DNA as a dimer and can form stable heterodimers. Interacts with trbl. Ubiquitination/deubiquitination regulates border cell migration. Ubiquitination is stimulated by trbl, which leads to proteasomal degradation and inhibits border cell migration. Deubiquitination by Usp47, leads to its stabilization and promotes border cell migration.

It localises to the nucleus. Its function is as follows. Required for the expression of gene products mediating border cell migration. Among the DNA sequences that this protein binds with high affinity is a conserved site within the promoter of its gene. In Drosophila melanogaster (Fruit fly), this protein is CCAAT/enhancer-binding protein (slbo).